The chain runs to 517 residues: T-complex protein 11-like protein 2 (517 aa).

Residues 1–59 (MPFNGEKQYVNEDQQSDSESSRFSESTASLSDYGCSRQSFTSDSSSKSSSPASTSPPRG) form a disordered region. A Phosphoserine modification is found at Ser16. Residues 17–55 (DSESSRFSESTASLSDYGCSRQSFTSDSSSKSSSPASTS) are compositionally biased toward low complexity.

The protein belongs to the TCP11 family. As to quaternary structure, interacts with FMNL2; this interaction promotes muscle-derived satellite cell (MDSC) migration and differentiation.

It is found in the cytoplasm. It localises to the cytoskeleton. Functionally, promotes the migration of muscle-derived satellite cells (MDSCs) during differentiation throught interaction with FMNL2 and therefore may participate in microfilament assembly. This Rattus norvegicus (Rat) protein is T-complex protein 11-like protein 2.